The primary structure comprises 665 residues: Methionine--tRNA ligase (665 aa).

Residues 12 to 22 (YYPSGKLHIGS) carry the 'HIGH' region motif. Residues 308-312 (KMSKS) carry the 'KMSKS' region motif. Lys-311 contacts ATP. One can recognise a tRNA-binding domain in the interval 562 to 665 (TFDAVEIRVA…SSVPNGSIIG (104 aa)).

This sequence belongs to the class-I aminoacyl-tRNA synthetase family. MetG type 2B subfamily. Homodimer.

The protein localises to the cytoplasm. It carries out the reaction tRNA(Met) + L-methionine + ATP = L-methionyl-tRNA(Met) + AMP + diphosphate. Functionally, is required not only for elongation of protein synthesis but also for the initiation of all mRNA translation through initiator tRNA(fMet) aminoacylation. In Streptococcus pyogenes serotype M3 (strain SSI-1), this protein is Methionine--tRNA ligase (metG).